The following is a 305-amino-acid chain: MANKNNVTELIFTGLFQDPEVQKVCFVLFLPVYLATLLGNSLILVAVSISKTLHSPMYFFLSSLSLVEICYSSTIVPKFITDLLAKVKTISLKGCLTQIFFSHFFGVVEVILLVVMAYDRYVAICKPLHYMNIMSRQVCHMLVAGSWLGGFIHSIIQIIITIPLPFCGPNVIDHYFCDLQQLFKLACTDTFMEGFIVMANSGLISIVSLFILVSSYAVILISLRKRSAEGRRKALSTCASHITVVILFFVPGAFIYMRPSSTFTEDKLVSVFYTVITPMLNPIVYTLRNTEMKNAIRMSWKQKDS.

Over methionine 1–cysteine 25 the chain is Extracellular. A glycan (N-linked (GlcNAc...) asparagine) is linked at asparagine 6. A helical membrane pass occupies residues phenylalanine 26–alanine 46. Topologically, residues valine 47–serine 55 are cytoplasmic. A helical transmembrane segment spans residues proline 56–valine 76. Over proline 77 to cysteine 95 the chain is Extracellular. Cysteine 95 and cysteine 187 are oxidised to a cystine. A helical membrane pass occupies residues leucine 96–methionine 116. Residues alanine 117–methionine 141 are Cytoplasmic-facing. Residues leucine 142–isoleucine 162 form a helical membrane-spanning segment. At proline 163–glycine 202 the chain is on the extracellular side. The helical transmembrane segment at leucine 203–leucine 223 threads the bilayer. Residues arginine 224–serine 236 are Cytoplasmic-facing. Residues threonine 237–methionine 257 form a helical membrane-spanning segment. Residues arginine 258–aspartate 266 are Extracellular-facing. A helical membrane pass occupies residues lysine 267–leucine 287. The Cytoplasmic portion of the chain corresponds to arginine 288–serine 305.

This sequence belongs to the G-protein coupled receptor 1 family.

It localises to the cell membrane. Functionally, odorant receptor. The chain is Olfactory receptor 4B13 from Mus musculus (Mouse).